Here is a 432-residue protein sequence, read N- to C-terminus: Neuronal pentraxin-1 (432 aa).

The first 22 residues, 1 to 22 (MPAGRAARTCALLALCLLGAGA), serve as a signal peptide directing secretion. Residues 90–122 (ESQSTLDPGAGEARAGGGRKQPGSGKNTMGDLS) form a disordered region. N-linked (GlcNAc...) asparagine glycosylation is found at N154 and N193. Residues 226-428 (DKFQLTFPLR…GATKWTFEAC (203 aa)) form the Pentraxin (PTX) domain. The cysteines at positions 256 and 316 are disulfide-linked. 5 residues coordinate Ca(2+): N280, E358, Q359, D360, and Q370.

As to quaternary structure, homooligomer or heterooligomer (probably pentamer) with neuronal pentraxin receptor (NPTXR). It depends on Ca(2+) as a cofactor.

It localises to the secreted. It is found in the cytoplasmic vesicle. Its subcellular location is the secretory vesicle. The protein resides in the endoplasmic reticulum. Its function is as follows. May be involved in mediating uptake of synaptic material during synapse remodeling or in mediating the synaptic clustering of AMPA glutamate receptors at a subset of excitatory synapses. This chain is Neuronal pentraxin-1 (NPTX1), found in Homo sapiens (Human).